The primary structure comprises 341 residues: Methionine import ATP-binding protein MetN 3 (341 aa).

The ABC transporter domain occupies 2-241 (IEFQNVTKTF…PSHETTKRFI (240 aa)). Position 38–45 (38–45 (GFSGAGKS)) interacts with ATP.

It belongs to the ABC transporter superfamily. Methionine importer (TC 3.A.1.24) family. The complex is composed of two ATP-binding proteins (MetN), two transmembrane proteins (MetI) and a solute-binding protein (MetQ).

Its subcellular location is the cell membrane. The catalysed reaction is L-methionine(out) + ATP + H2O = L-methionine(in) + ADP + phosphate + H(+). The enzyme catalyses D-methionine(out) + ATP + H2O = D-methionine(in) + ADP + phosphate + H(+). Part of the ABC transporter complex MetNIQ involved in methionine import. Responsible for energy coupling to the transport system. In Oceanobacillus iheyensis (strain DSM 14371 / CIP 107618 / JCM 11309 / KCTC 3954 / HTE831), this protein is Methionine import ATP-binding protein MetN 3.